Here is a 331-residue protein sequence, read N- to C-terminus: L-lactate dehydrogenase A chain (331 aa).

NAD(+) is bound by residues 29-57 (GMVGMASAISILLKDLCDELAMVDVMEDK) and arginine 98. Residues arginine 105, asparagine 137, and arginine 168 each contribute to the substrate site. NAD(+) is bound at residue asparagine 137. Histidine 192 acts as the Proton acceptor in catalysis. Threonine 247 is a substrate binding site.

The protein belongs to the LDH/MDH superfamily. LDH family. Homotetramer.

It is found in the cytoplasm. The enzyme catalyses (S)-lactate + NAD(+) = pyruvate + NADH + H(+). The protein operates within fermentation; pyruvate fermentation to lactate; (S)-lactate from pyruvate: step 1/1. Interconverts simultaneously and stereospecifically pyruvate and lactate with concomitant interconversion of NADH and NAD(+). This Champsocephalus gunnari (Mackerel icefish) protein is L-lactate dehydrogenase A chain (ldha).